Reading from the N-terminus, the 72-residue chain is UPF0270 protein plu0398 (72 aa).

This sequence belongs to the UPF0270 family.

This is UPF0270 protein plu0398 from Photorhabdus laumondii subsp. laumondii (strain DSM 15139 / CIP 105565 / TT01) (Photorhabdus luminescens subsp. laumondii).